A 509-amino-acid chain; its full sequence is Cytochrome P450 monooxygenase hepC (509 aa).

A helical membrane pass occupies residues 5 to 25 (MIIPSFWTGTAIIGLVACAYV). Cys-454 provides a ligand contact to heme. Asn-491 carries an N-linked (GlcNAc...) asparagine glycan.

This sequence belongs to the cytochrome P450 family. Heme is required as a cofactor.

The protein localises to the membrane. Its pathway is secondary metabolite biosynthesis. In terms of biological role, cytochrome P450 monooxygenase; part of the gene cluster that mediates the biosynthesis of heptelidic acid (HA), a sesquiterpene lactone that acts as an inhibitor of glyceraldehyde-3-phosphatedehydrogenase (GAPDH) and a growth inhibitor of the salt-tolerant lactic acid bacteria in soy sauce brewing. The sequence is that of Cytochrome P450 monooxygenase hepC from Aspergillus oryzae (strain ATCC 42149 / RIB 40) (Yellow koji mold).